The chain runs to 209 residues: Uracil phosphoribosyltransferase (209 aa).

Residues arginine 79, arginine 104, and 131-139 contribute to the 5-phospho-alpha-D-ribose 1-diphosphate site; that span reads DPMLATGGS. Uracil-binding positions include isoleucine 194 and 199–201; that span reads GDA. A 5-phospho-alpha-D-ribose 1-diphosphate-binding site is contributed by aspartate 200.

It belongs to the UPRTase family. It depends on Mg(2+) as a cofactor.

It carries out the reaction UMP + diphosphate = 5-phospho-alpha-D-ribose 1-diphosphate + uracil. It participates in pyrimidine metabolism; UMP biosynthesis via salvage pathway; UMP from uracil: step 1/1. Allosterically activated by GTP. Catalyzes the conversion of uracil and 5-phospho-alpha-D-ribose 1-diphosphate (PRPP) to UMP and diphosphate. The polypeptide is Uracil phosphoribosyltransferase (Lactiplantibacillus plantarum (strain ATCC BAA-793 / NCIMB 8826 / WCFS1) (Lactobacillus plantarum)).